Consider the following 159-residue polypeptide: Neuroglobin (159 aa).

The 149-residue stretch at K3 to A151 folds into the Globin domain. Heme b contacts are provided by H66 and H98.

Belongs to the globin family. In terms of assembly, monomer. Homodimers and homotetramers. Mainly monomeric but also detected as part of homodimers and homotetramers.

The protein localises to the cytoplasm. It is found in the cytosol. It localises to the mitochondrion matrix. The catalysed reaction is Fe(III)-heme b-[protein] + nitric oxide + H2O = Fe(II)-heme b-[protein] + nitrite + 2 H(+). Functionally, monomeric globin with a bis-histidyl six-coordinate heme-iron atom through which it can bind dioxygen, carbon monoxide and nitric oxide. Could help transport oxygen and increase its availability to the metabolically active neuronal tissues, though its low quantity in tissues as well as its high affinity for dioxygen, which may limit its oxygen-releasing ability, argue against it. The ferrous/deoxygenated form exhibits a nitrite reductase activity and it could produce nitric oxide which in turn inhibits cellular respiration in response to hypoxia. In its ferrous/deoxygenated state, it may also exhibit GDI (Guanine nucleotide Dissociation Inhibitor) activity toward heterotrimeric G-alpha proteins, thereby regulating signal transduction to facilitate neuroprotective responses in the wake of hypoxia and associated oxidative stress. The protein is Neuroglobin (ngb) of Chaenocephalus aceratus (Blackfin icefish).